The following is a 109-amino-acid chain: Aquaporin-2 (109 aa).

The Cytoplasmic portion of the chain corresponds to 1–6 (SIAFSK). Residues 7–27 (AVFSEFLATLLFVFFGLGSAL) form a helical membrane-spanning segment. Residues 28-35 (NWPQALPS) lie on the Extracellular side of the membrane. The chain crosses the membrane as a helical span at residues 36–54 (GLQIAMAFGLAIGTLVQTL). At 55 to 59 (GHISG) the chain is on the cytoplasmic side. Residues 60-69 (AHINPAVTVA) constitute an intramembrane region (discontinuously helical). An NPA 1 motif is present at residues 63 to 65 (NPA). At 70–80 (CLVGCHVSFLR) the chain is on the cytoplasmic side. The chain crosses the membrane as a helical span at residues 81-102 (AIFYVAAQLLGAVAGAALLHEL). Residues 103–109 (TPPDIRG) lie on the Extracellular side of the membrane.

It belongs to the MIP/aquaporin (TC 1.A.8) family. Homotetramer. Post-translationally, serine phosphorylation is necessary and sufficient for expression at the apical membrane. Endocytosis is not phosphorylation-dependent. In terms of processing, N-glycosylated.

It localises to the apical cell membrane. Its subcellular location is the basolateral cell membrane. It is found in the cell membrane. The protein localises to the cytoplasmic vesicle membrane. The protein resides in the golgi apparatus. It localises to the trans-Golgi network membrane. It carries out the reaction H2O(in) = H2O(out). The catalysed reaction is glycerol(in) = glycerol(out). Functionally, forms a water-specific channel that provides the plasma membranes of renal collecting duct with high permeability to water, thereby permitting water to move in the direction of an osmotic gradient. Plays an essential role in renal water homeostasis. Could also be permeable to glycerol. This chain is Aquaporin-2, found in Orycteropus afer (Aardvark).